Reading from the N-terminus, the 96-residue chain is Putative septation protein SpoVG (96 aa).

It belongs to the SpoVG family.

Functionally, could be involved in septation. In Oceanobacillus iheyensis (strain DSM 14371 / CIP 107618 / JCM 11309 / KCTC 3954 / HTE831), this protein is Putative septation protein SpoVG.